The primary structure comprises 275 residues: Shikimate dehydrogenase (NADP(+)) (275 aa).

Residues 19-21 (SKS) and threonine 66 each bind shikimate. Lysine 70 serves as the catalytic Proton acceptor. Glutamate 82 contacts NADP(+). Residues asparagine 91 and aspartate 106 each contribute to the shikimate site. Residues 130–134 (GAGGA), 154–159 (NRTASK), and methionine 217 each bind NADP(+). Residue tyrosine 219 coordinates shikimate. Residue glycine 241 participates in NADP(+) binding.

The protein belongs to the shikimate dehydrogenase family. As to quaternary structure, homodimer.

It carries out the reaction shikimate + NADP(+) = 3-dehydroshikimate + NADPH + H(+). The protein operates within metabolic intermediate biosynthesis; chorismate biosynthesis; chorismate from D-erythrose 4-phosphate and phosphoenolpyruvate: step 4/7. Involved in the biosynthesis of the chorismate, which leads to the biosynthesis of aromatic amino acids. Catalyzes the reversible NADPH linked reduction of 3-dehydroshikimate (DHSA) to yield shikimate (SA). The protein is Shikimate dehydrogenase (NADP(+)) of Colwellia psychrerythraea (strain 34H / ATCC BAA-681) (Vibrio psychroerythus).